The following is a 275-amino-acid chain: uncharacterized protein (275 aa).

Asp45 contributes to the NADPH binding site. Residues Tyr50 and His111 each act as proton donor in the active site. NADPH-binding residues include Ser139, Gln162, Leu191, Lys196, Ser232, Ser233, and Arg237.

The protein belongs to the aldo/keto reductase family.

The protein resides in the cytoplasm. The protein localises to the nucleus. This is an uncharacterized protein from Schizosaccharomyces pombe (strain 972 / ATCC 24843) (Fission yeast).